Consider the following 323-residue polypeptide: Leucine-rich repeat-containing protein 46 (323 aa).

LRR repeat units lie at residues 49–70, 71–92, 93–114, and 115–135; these read DLETVRLDGEGITCIGNLERLR, NIHSLYLQSNKIQRIENLACIT, SLRFLSLAGNQIRHVENLLDLQ, and YLQFLDLSENLIETLKLDELP. The LRRCT domain occupies 146-188; it reads NPCTNQDGYRKMVIGALPLLLDLDKQPILERWTSDEEDKSSDE. T178 bears the Phosphothreonine mark. S179, S185, and S186 each carry phosphoserine. Residues 203–228 adopt a coiled-coil conformation; sequence RGFFKDLEQELHQHQERRQQAALTEH. The disordered stretch occupies residues 252 to 323; that stretch reads DCSPAVTEEP…TKSTNKRGTK (72 aa). Polar residues predominate over residues 269-290; it reads ATSSTQMASSSKKQVPRNQKGS. Residues 297–310 show a composition bias toward low complexity; that stretch reads ALAATASKTSLAAA. Residue S303 is modified to Phosphoserine.

Its subcellular location is the cell projection. The protein localises to the cilium. It is found in the flagellum. Its function is as follows. Required for normal spermatogenesis and male fertility. Plays an important role in sperm flagellum biogenesis. The protein is Leucine-rich repeat-containing protein 46 (Lrrc46) of Rattus norvegicus (Rat).